Here is a 327-residue protein sequence, read N- to C-terminus: DNA-directed RNA polymerase subunit alpha (327 aa).

Residues 1 to 227 form an alpha N-terminal domain (alpha-NTD) region; sequence MLIAHRPTLI…ELFGLARELN (227 aa). The interval 244–327 is alpha C-terminal domain (alpha-CTD); sequence SDEDLRIPIE…GSYFDPNYGS (84 aa).

Belongs to the RNA polymerase alpha chain family. In terms of assembly, homodimer. The RNAP catalytic core consists of 2 alpha, 1 beta, 1 beta' and 1 omega subunit. When a sigma factor is associated with the core the holoenzyme is formed, which can initiate transcription.

The catalysed reaction is RNA(n) + a ribonucleoside 5'-triphosphate = RNA(n+1) + diphosphate. In terms of biological role, DNA-dependent RNA polymerase catalyzes the transcription of DNA into RNA using the four ribonucleoside triphosphates as substrates. The sequence is that of DNA-directed RNA polymerase subunit alpha from Tropheryma whipplei (strain TW08/27) (Whipple's bacillus).